A 255-amino-acid chain; its full sequence is tRNA pseudouridine synthase A (255 aa).

The Nucleophile role is filled by D52. Y111 contacts substrate.

It belongs to the tRNA pseudouridine synthase TruA family. Homodimer.

The enzyme catalyses uridine(38/39/40) in tRNA = pseudouridine(38/39/40) in tRNA. Functionally, formation of pseudouridine at positions 38, 39 and 40 in the anticodon stem and loop of transfer RNAs. In Cereibacter sphaeroides (strain KD131 / KCTC 12085) (Rhodobacter sphaeroides), this protein is tRNA pseudouridine synthase A.